Here is a 141-residue protein sequence, read N- to C-terminus: uncharacterized protein (141 aa).

5 helical membrane-spanning segments follow: residues 7 to 27 (FWALLSAAFAALTAVFAKVGV), 34 to 54 (FATLIRTVVILCVIAAIVAAT), 69 to 89 (LFLALSGLATGASWLAYFRAL), 97 to 117 (VAPLDKLSIVMVAIFGVLFLG), and 121 to 141 (NLMNWLGVAFIAAGALLLAVF). The region spanning 14–140 (AFAALTAVFA…IAAGALLLAV (127 aa)) is the EamA domain.

The protein belongs to the EamA transporter family.

It is found in the cell membrane. This is an uncharacterized protein from Sinorhizobium sp.